We begin with the raw amino-acid sequence, 641 residues long: Threonine--tRNA ligase (641 aa).

A TGS domain is found at 1–61 (MIKISFFDNQ…KKNGNLEILT (61 aa)). Residues 240 to 538 (DHKKINKELD…LVEETKGVFP (299 aa)) form a catalytic region. Zn(2+) is bound by residues cysteine 334, histidine 385, and histidine 515.

It belongs to the class-II aminoacyl-tRNA synthetase family. As to quaternary structure, homodimer. The cofactor is Zn(2+).

It is found in the cytoplasm. It catalyses the reaction tRNA(Thr) + L-threonine + ATP = L-threonyl-tRNA(Thr) + AMP + diphosphate + H(+). Its function is as follows. Catalyzes the attachment of threonine to tRNA(Thr) in a two-step reaction: L-threonine is first activated by ATP to form Thr-AMP and then transferred to the acceptor end of tRNA(Thr). Also edits incorrectly charged L-seryl-tRNA(Thr). The polypeptide is Threonine--tRNA ligase (Aster yellows witches'-broom phytoplasma (strain AYWB)).